Here is a 236-residue protein sequence, read N- to C-terminus: Orotidine 5'-phosphate decarboxylase (236 aa).

Residues Asp16, Lys38, 65–74, Thr123, Arg184, Gln193, Gly213, and Arg214 contribute to the substrate site; that span reads DLKLHDIGNT. The Proton donor role is filled by Lys67.

Belongs to the OMP decarboxylase family. Type 1 subfamily. Homodimer.

The enzyme catalyses orotidine 5'-phosphate + H(+) = UMP + CO2. It participates in pyrimidine metabolism; UMP biosynthesis via de novo pathway; UMP from orotate: step 2/2. Its function is as follows. Catalyzes the decarboxylation of orotidine 5'-monophosphate (OMP) to uridine 5'-monophosphate (UMP). This is Orotidine 5'-phosphate decarboxylase from Methylobacterium nodulans (strain LMG 21967 / CNCM I-2342 / ORS 2060).